We begin with the raw amino-acid sequence, 562 residues long: Solute carrier family 40 member 1 (562 aa).

Topologically, residues 1–20 (MDSPASKKPRCERFREFFKS) are cytoplasmic. The helical transmembrane segment at 21 to 50 (AKFLIYVGHALSTWGDRMWNFAVAVFLVEL) threads the bilayer. D36 contacts Fe cation. Residues 51–54 (YGNS) lie on the Extracellular side of the membrane. A helical transmembrane segment spans residues 55–81 (LLLTAVYGLVVAGSVLLLGAIIGDWVD). The Cytoplasmic segment spans residues 82-84 (KNP). A helical transmembrane segment spans residues 85 to 115 (RLKVAQTSLVVQNSAVILCGALLMAVFQFKQ). The Extracellular portion of the chain corresponds to 116–123 (QLSSMYDG). The chain crosses the membrane as a helical span at residues 124-159 (WLLTTCYIMVISIANIANLASTAMSITIQRDWVVVV). The Cytoplasmic portion of the chain corresponds to 160-161 (AG). Residues 162–192 (DDRSKLADMNATVRIIDQLTNILAPMLVGQI) traverse the membrane as a helical segment. Over 193–199 (MAFGSHF) the chain is Extracellular. The chain crosses the membrane as a helical span at residues 200–226 (IGCGFISGWNLFSMCLEYFLLWKVYQK). The Cytoplasmic portion of the chain corresponds to 227-300 (TPALAFKAGQ…DGWVAYYNQS (74 aa)). Residues 301 to 327 (IFFAGMSLAFLYMTVLGFDCITTGYAY) form a helical membrane-spanning segment. C320 contacts Fe cation. At 328 to 332 (TQGLN) the chain is on the extracellular side. Residues 333 to 360 (GSVLSLLMGASAVSGICGTVAFTWIRKK) form a helical membrane-spanning segment. Residues 361–362 (CG) are Cytoplasmic-facing. The chain crosses the membrane as a helical span at residues 363-385 (LIRTGFIAGVTQLSCLTLCVASV). The Extracellular segment spans residues 386–444 (FAPGSPFDLSVSPFEEVLRHLFGDSGSLRESPTFIPTTEPPIQANVTVFEEAPPVESYM). Residues 445–474 (SVGLLFAGVIAARVGLWSFDLTVTQLIQEN) form a helical membrane-spanning segment. At 475 to 479 (VIESE) the chain is on the cytoplasmic side. The chain crosses the membrane as a helical span at residues 480 to 504 (RGVINGVQNSMNYLLDLLHFIMVIL). Fe cation is bound at residue H498. The Extracellular portion of the chain corresponds to 505–507 (APN). A helical membrane pass occupies residues 508-533 (PEAFGLLVIISVSFVAMGHMMYFRFA). Topologically, residues 534-562 (YKSLGSRLFLFCSPEQKPDPNIPSLPNSV) are cytoplasmic.

This sequence belongs to the ferroportin (FP) (TC 2.A.100) family. SLC40A subfamily. As to expression, expressed in the yolk sac and placenta.

The protein resides in the cell membrane. It localises to the basolateral cell membrane. The enzyme catalyses Fe(2+)(in) = Fe(2+)(out). In terms of biological role, transports Fe(2+) from the inside of a cell to the outside of the cell, playing a key role for maintaining systemic iron homeostasis. May be involved in transfer of Fe(2+) between maternal and fetal circulation. This Danio rerio (Zebrafish) protein is Solute carrier family 40 member 1 (slc40a1).